A 352-amino-acid chain; its full sequence is Protein Wnt-4a (352 aa).

The first 22 residues, 1 to 22 (MSSEYLIRSLLMLFLALFSANA), serve as a signal peptide directing secretion. Cystine bridges form between Cys-78/Cys-89, Cys-128/Cys-136, Cys-138/Cys-155, Cys-206/Cys-220, Cys-208/Cys-215, Cys-280/Cys-312, Cys-297/Cys-307, Cys-311/Cys-351, Cys-327/Cys-342, Cys-329/Cys-339, and Cys-334/Cys-335. N-linked (GlcNAc...) asparagine glycosylation is present at Asn-88. Ser-212 carries O-palmitoleoyl serine; by PORCN lipidation. An N-linked (GlcNAc...) asparagine glycan is attached at Asn-298.

The protein belongs to the Wnt family. Post-translationally, palmitoleoylation is required for efficient binding to frizzled receptors. Depalmitoleoylation leads to Wnt signaling pathway inhibition. Caudal forebrain and neural keel, the floor plate, the gill slit and the developing pronephros.

Its subcellular location is the secreted. The protein localises to the extracellular space. The protein resides in the extracellular matrix. In terms of biological role, ligand for members of the frizzled family of seven transmembrane receptors. Plays an important role in embryonic development. The polypeptide is Protein Wnt-4a (wnt4a) (Danio rerio (Zebrafish)).